We begin with the raw amino-acid sequence, 359 residues long: Probable ribonucleotide transport ATP-binding protein mkl (359 aa).

The 237-residue stretch at 28–264 folds into the ABC transporter domain; sequence IEVNGLTKSF…DEPVVRQFLN (237 aa). 60–67 contributes to the ATP binding site; it reads GPSGTGKS.

This sequence belongs to the ABC transporter superfamily.

Not known, could be involved in the transport of ribonucleotides. The protein is Probable ribonucleotide transport ATP-binding protein mkl (mkl) of Mycobacterium bovis (strain ATCC BAA-935 / AF2122/97).